The chain runs to 496 residues: MVKEVVLGIDLGTSAIKIIAVDQLGNVIESVSETLKLYQEHPGYSEQDPNEWFEATKKGIKELIQSTEMSDKIVKGISFSGQMHGLVIVDDNGIPLRKAILWNDTRNSIQCRQIEDIYGERLNYNPILEGFTLPKMLWVQQHEPEIWNRVDVFMLPKDYLRYCLTQTIHMEYSDACSTLLFNPENYEWTKDVGDTFNIGDIYPPLVKSHSYVGNVTSSLAKELGLSSDVAVYAGGGDNACGAIGAGVIHDKSALCSIGTSGVVLNVEYQRVTSYDSNLHLFNHSVPDTYYAMGVTLAAGYSLNWLKQTFFENESFEEILNLAASSKIGANGLLFTPYLAGERTPHGDAQIRGSFIGISGQHTKADFARAVIEGITYSLYDSIKIMRRAGHEMNSITSIGGGAKSRFWLQLQADIFNVQIKRLKHEEGPSMGAAILAAYGLGWFKTIESCVEAFIKVDEVFEPNNENHDLYEQYYSVYEAIYKQTKQLTADLLTITN.

Residue 83–84 (MH) participates in substrate binding. Residue aspartate 237 is the Proton acceptor of the active site.

It belongs to the FGGY kinase family.

It catalyses the reaction D-xylulose + ATP = D-xylulose 5-phosphate + ADP + H(+). Functionally, catalyzes the phosphorylation of D-xylulose to D-xylulose 5-phosphate. This Staphylococcus epidermidis (strain ATCC 12228 / FDA PCI 1200) protein is Xylulose kinase.